A 148-amino-acid polypeptide reads, in one-letter code: SsrA-binding protein (148 aa).

The disordered stretch occupies residues 123–148; it reads KLHDKRETEKKRDWEREKARIMRSAT. The span at 126-142 shows a compositional bias: basic and acidic residues; sequence DKRETEKKRDWEREKAR.

This sequence belongs to the SmpB family.

Its subcellular location is the cytoplasm. In terms of biological role, required for rescue of stalled ribosomes mediated by trans-translation. Binds to transfer-messenger RNA (tmRNA), required for stable association of tmRNA with ribosomes. tmRNA and SmpB together mimic tRNA shape, replacing the anticodon stem-loop with SmpB. tmRNA is encoded by the ssrA gene; the 2 termini fold to resemble tRNA(Ala) and it encodes a 'tag peptide', a short internal open reading frame. During trans-translation Ala-aminoacylated tmRNA acts like a tRNA, entering the A-site of stalled ribosomes, displacing the stalled mRNA. The ribosome then switches to translate the ORF on the tmRNA; the nascent peptide is terminated with the 'tag peptide' encoded by the tmRNA and targeted for degradation. The ribosome is freed to recommence translation, which seems to be the essential function of trans-translation. This chain is SsrA-binding protein, found in Burkholderia thailandensis (strain ATCC 700388 / DSM 13276 / CCUG 48851 / CIP 106301 / E264).